The following is a 226-amino-acid chain: MYTLIIPAAGQGKRMGAGKNKLFLLINGVPIIVHTLRAFEKDKACKRIIMAINEEERPYFEELMQKYPVEKQVQFIQGGAERQDSVYNALQYVSGVEYVLVHDGARPFVTNKMMQDVLTAAEKYGASICAVPVKDTIKKVEQGVVVETVERSQLKAVQTPQGFSVPLLLEAHRSAKQSCFLGTDDASLVERVGKKVGVVEGSYYNIKVTTPEDLLIAESFLHVQKK.

It belongs to the IspD/TarI cytidylyltransferase family. IspD subfamily.

It carries out the reaction 2-C-methyl-D-erythritol 4-phosphate + CTP + H(+) = 4-CDP-2-C-methyl-D-erythritol + diphosphate. Its pathway is isoprenoid biosynthesis; isopentenyl diphosphate biosynthesis via DXP pathway; isopentenyl diphosphate from 1-deoxy-D-xylulose 5-phosphate: step 2/6. Functionally, catalyzes the formation of 4-diphosphocytidyl-2-C-methyl-D-erythritol from CTP and 2-C-methyl-D-erythritol 4-phosphate (MEP). In Bacillus mycoides (strain KBAB4) (Bacillus weihenstephanensis), this protein is 2-C-methyl-D-erythritol 4-phosphate cytidylyltransferase.